The sequence spans 545 residues: Monocarboxylate transporter 8 (545 aa).

The tract at residues 1-98 (MALPSPASEE…VETRGTARGF (98 aa)) is disordered. At Ala2 the chain carries N-acetylalanine. Topologically, residues 2-102 (ALPSPASEEA…GTARGFQPPE (101 aa)) are cytoplasmic. Tandem repeats lie at residues 29 to 50 (PVPEPEPEPEPEPEPEPEPVPV) and 51 to 72 (PPPEPQPEPEPQPLPDPAPLPV). The 2 X 22 AA approximate tandem repeats stretch occupies residues 29–72 (PVPEPEPEPEPEPEPEPEPVPVPPPEPQPEPEPQPLPDPAPLPV). A compositionally biased stretch (acidic residues) spans 33-45 (PEPEPEPEPEPEP). Positions 46–70 (EPVPVPPPEPQPEPEPQPLPDPAPL) are enriched in pro residues. Residues 103–123 (GGFGWIVVFAATWCNGSIFGI) form a helical membrane-spanning segment. The Extracellular segment spans residues 124-149 (HNSVGILYSMLLEEEKEKNRQVEFQA). Residues 150 to 170 (AWVGALAMGMIFFCSPIVSIF) traverse the membrane as a helical segment. Topologically, residues 171-181 (TDRLGCRITAT) are cytoplasmic. The chain crosses the membrane as a helical span at residues 182 to 202 (TGAAVAFIGLHTSSFTSSLSL). Residues 203 to 204 (RY) lie on the Extracellular side of the membrane. The chain crosses the membrane as a helical span at residues 205–225 (FTYGILFGCGCSFAFQPSLVI). Over 226 to 235 (LGHYFQRRLG) the chain is Cytoplasmic. Residues 236-256 (LANGVVSAGSSIFSMSFPFLI) form a helical membrane-spanning segment. The Extracellular segment spans residues 257–264 (KMLGDRIK). Residues 265 to 285 (LAQTFQVLSTFMFVLTLLSLT) traverse the membrane as a helical segment. Residues 286 to 328 (YRPLLPSSQDTPSKRGAHTLRQRFLVQFRKYFNMRVFRQRTYR) lie on the Cytoplasmic side of the membrane. A helical transmembrane segment spans residues 329-349 (IWAFGIAAAALGYFVPYVHLM). Residues 350–362 (KYVEDKFKEIKET) are Extracellular-facing. Residues 363 to 383 (WVLLVCIGATSGLGRLVSGHI) traverse the membrane as a helical segment. The Cytoplasmic segment spans residues 384–392 (SDSIPGLKK). A helical transmembrane segment spans residues 393 to 413 (IYLQVLSFLLLGLMSMMIPLC). Topologically, residues 414–415 (RD) are extracellular. A helical transmembrane segment spans residues 416–436 (FGGLIVVCLFLGLCDGFFITI). At 437–453 (MAPIAFELVGPMQASQA) the chain is on the cytoplasmic side. A helical membrane pass occupies residues 454-474 (IGYLLGMMALPMIAGPPIAGL). Residues 475-483 (LRNCFGNYH) are Extracellular-facing. A helical transmembrane segment spans residues 484-504 (VAFYFAGVPPIIGAVILFFVP). At 505–545 (LMHQRMFKKEQRESSKDKMLSHDPDPNGELLPGSPTPEEPI) the chain is on the cytoplasmic side. A compositionally biased stretch (basic and acidic residues) spans 514-529 (EQRESSKDKMLSHDPD). The tract at residues 514-545 (EQRESSKDKMLSHDPDPNGELLPGSPTPEEPI) is disordered. Thr540 carries the phosphothreonine modification.

The protein belongs to the major facilitator superfamily. Monocarboxylate porter (TC 2.A.1.13) family. In terms of assembly, monomer. Homodimer. Homooligomer. In terms of tissue distribution, expressed at highest levels in liver, lower levels in brain, kidney and heart (at protein level). Expressed in microvessels of the blood-brain barrier (BBB) (at protein level).

It localises to the cell membrane. Its subcellular location is the apical cell membrane. The catalysed reaction is 3,3',5-triiodo-L-thyronine(out) = 3,3',5-triiodo-L-thyronine(in). It carries out the reaction 3,3',5'-triiodo-L-thyronine(out) = 3,3',5'-triiodo-L-thyronine(in). It catalyses the reaction L-thyroxine(out) = L-thyroxine(in). The enzyme catalyses 3,3'-diiodo-L-thyronine(out) = 3,3'-diiodo-L-thyronine(in). In terms of biological role, specific thyroid hormone transmembrane transporter, that mediates both uptake and efflux of thyroid hormone across the cell membrane independently of pH or a Na(+) gradient. Major substrates are the iodothyronines T3 and T4 and to a lesser extent rT3 and 3,3-diiodothyronine (3,3'-T2). Acts as an important mediator of thyroid hormone transport, especially T3, through the blood-brain barrier. The protein is Monocarboxylate transporter 8 (SLC16A2) of Rattus norvegicus (Rat).